The following is a 476-amino-acid chain: Inosine-5'-monophosphate dehydrogenase (476 aa).

CBS domains are found at residues 93 to 151 (IIRD…VKDI) and 152 to 211 (MTKD…TRDE). NAD(+)-binding positions include Asp242 and 292–294 (GIG). Positions 294 and 296 each coordinate K(+). Residue Ser297 participates in IMP binding. Cys299 is a binding site for K(+). Catalysis depends on Cys299, which acts as the Thioimidate intermediate. IMP contacts are provided by residues 334 to 336 (DGG), 357 to 358 (GY), and 381 to 385 (YRGMG). Catalysis depends on Arg398, which acts as the Proton acceptor. Glu408 is a binding site for IMP. Position 462 (Glu462) interacts with K(+).

The protein belongs to the IMPDH/GMPR family. In terms of assembly, homotetramer. K(+) serves as cofactor.

The enzyme catalyses IMP + NAD(+) + H2O = XMP + NADH + H(+). Its pathway is purine metabolism; XMP biosynthesis via de novo pathway; XMP from IMP: step 1/1. Its activity is regulated as follows. Mycophenolic acid (MPA) is a non-competitive inhibitor that prevents formation of the closed enzyme conformation by binding to the same site as the amobile flap. In contrast, mizoribine monophosphate (MZP) is a competitive inhibitor that induces the closed conformation. MPA is a potent inhibitor of mammalian IMPDHs but a poor inhibitor of the bacterial enzymes. MZP is a more potent inhibitor of bacterial IMPDH. Its function is as follows. Catalyzes the conversion of inosine 5'-phosphate (IMP) to xanthosine 5'-phosphate (XMP), the first committed and rate-limiting step in the de novo synthesis of guanine nucleotides, and therefore plays an important role in the regulation of cell growth. The sequence is that of Inosine-5'-monophosphate dehydrogenase from Korarchaeum cryptofilum (strain OPF8).